The primary structure comprises 484 residues: Vanillin dehydrogenase (484 aa).

Residues 156–157, 180–183, and 234–235 contribute to the NADP(+) site; these read WN, KPAS, and GS. Residues Lys180 and 234 to 239 contribute to the NAD(+) site; that span reads GSTPVG. The active-site Proton acceptor is the Glu258. Leu259 is a binding site for NADP(+). The Nucleophile role is filled by Cys292. NAD(+) contacts are provided by Gln339 and Glu386. Residue Glu386 coordinates NADP(+).

It belongs to the aldehyde dehydrogenase family. As to quaternary structure, exists as a homodimer, homotrimer and homotetramer.

The catalysed reaction is vanillin + NAD(+) + H2O = vanillate + NADH + 2 H(+). It catalyses the reaction vanillin + NADP(+) + H2O = vanillate + NADPH + 2 H(+). It carries out the reaction 3,4-dihydroxybenzaldehyde + NAD(+) + H2O = 3,4-dihydroxybenzoate + NADH + 2 H(+). The enzyme catalyses 3,4-dihydroxybenzaldehyde + NADP(+) + H2O = 3,4-dihydroxybenzoate + NADPH + 2 H(+). The catalysed reaction is 4-hydroxybenzaldehyde + NAD(+) + H2O = 4-hydroxybenzoate + NADH + 2 H(+). It catalyses the reaction 4-hydroxybenzaldehyde + NADP(+) + H2O = 4-hydroxybenzoate + NADPH + 2 H(+). Its function is as follows. Catalyzes oxidation of vanillin to vanillate. Also oxidizes 3,4-dihydroxybenzaldehyde and 4-hydroxybenzaldehyde significantly. Other aromatic aldehyde substrates in the order of decreasing activity include 3-hydroxybenzaldehyde, 4-nitrobenzaldehyde, terephthalaldehyde, 2,4-dichlorobenzaldehyde, benzaldehyde and 3-phenylpropanal. Low activity with phthalaldehyde, cinnamaldehyde and syringaldehyde. No activity with phenylacetaldehyde, formaldehyde or aldehyde. Active with both NAD(+) and NADP(+). Involved in the degradation pathway of lignin-derived aromatic compounds of plant cell walls. Catalyzes the conversion of vanillin to vanillate due to toxicity of vanillin to the cells. This chain is Vanillin dehydrogenase, found in Corynebacterium glutamicum (strain ATCC 13032 / DSM 20300 / JCM 1318 / BCRC 11384 / CCUG 27702 / LMG 3730 / NBRC 12168 / NCIMB 10025 / NRRL B-2784 / 534).